We begin with the raw amino-acid sequence, 234 residues long: Small ribosomal subunit protein uS3 (234 aa).

The KH type-2 domain maps to 39 to 107; it reads IRKFLKKELY…EVSINIKEVK (69 aa).

The protein belongs to the universal ribosomal protein uS3 family. In terms of assembly, part of the 30S ribosomal subunit. Forms a tight complex with proteins S10 and S14.

In terms of biological role, binds the lower part of the 30S subunit head. Binds mRNA in the 70S ribosome, positioning it for translation. This chain is Small ribosomal subunit protein uS3, found in Helicobacter acinonychis (strain Sheeba).